We begin with the raw amino-acid sequence, 432 residues long: Glutamyl-tRNA reductase (432 aa).

Residues 49–52, serine 101, 106–108, and glutamine 112 each bind substrate; these read TCNR and EPQ. Cysteine 50 functions as the Nucleophile in the catalytic mechanism. 181–186 contributes to the NADP(+) binding site; the sequence is GAGETI. Residues 407 to 432 are disordered; that stretch reads FPEKPGYQHPPIATPIVRTDDADPAP.

This sequence belongs to the glutamyl-tRNA reductase family. In terms of assembly, homodimer.

The catalysed reaction is (S)-4-amino-5-oxopentanoate + tRNA(Glu) + NADP(+) = L-glutamyl-tRNA(Glu) + NADPH + H(+). It participates in porphyrin-containing compound metabolism; protoporphyrin-IX biosynthesis; 5-aminolevulinate from L-glutamyl-tRNA(Glu): step 1/2. Catalyzes the NADPH-dependent reduction of glutamyl-tRNA(Glu) to glutamate 1-semialdehyde (GSA). The chain is Glutamyl-tRNA reductase from Xanthomonas oryzae pv. oryzae (strain PXO99A).